The sequence spans 1024 residues: Beta-galactosidase (1024 aa).

Residues Asn103 and Asp202 each contribute to the substrate site. A Na(+)-binding site is contributed by Asp202. The Mg(2+) site is built by Glu417, His419, and Glu462. Residues Glu462 and 538–541 (EYAH) each bind substrate. Residue Glu462 is the Proton donor of the active site. The Nucleophile role is filled by Glu538. Asn598 is a binding site for Mg(2+). Residues Phe602 and Asn605 each contribute to the Na(+) site. The substrate site is built by Asn605 and Trp1000.

Belongs to the glycosyl hydrolase 2 family. In terms of assembly, homotetramer. Mg(2+) serves as cofactor. Requires Na(+) as cofactor.

The catalysed reaction is Hydrolysis of terminal non-reducing beta-D-galactose residues in beta-D-galactosides.. In Escherichia coli O6:H1 (strain CFT073 / ATCC 700928 / UPEC), this protein is Beta-galactosidase.